A 688-amino-acid polypeptide reads, in one-letter code: Lipase (688 aa).

Positions 1–35 (MKTRQNKYSIRKFSVGASSILIAALLFMGGGSAQA) are cleaved as a signal peptide. The interval 31-309 (GSAQAAEQQQ…KSAKQKQYKN (279 aa)) is disordered. A propeptide spans 36-302 (AEQQQDKGTV…KNEDQTNKSA (267 aa)) (removed in mature form). Polar residues predominate over residues 45-54 (VENSTTQSIG). Over residues 68–79 (NKNVNEKSNVNS) the composition is skewed to low complexity. 2 stretches are compositionally biased toward basic and acidic residues: residues 84 to 95 (ESLHNETPKNED) and 103 to 143 (SQND…KHAS). A compositionally biased stretch (polar residues) spans 144–172 (ENNQTLHSKAAQSNEDVKTKPSQLDNTAA). The segment covering 173–183 (KQEDSQKENLS) has biased composition (basic and acidic residues). Over residues 184 to 211 (KQDTQSSKTTDLLRATAQNQSKDSQSTE) the composition is skewed to polar residues. Over residues 240–267 (SKEEPLKVDKQANPTTDKDKSSKNDKGS) the composition is skewed to basic and acidic residues. Residues 274–289 (LESNAVATTNKQSKQQ) show a composition bias toward polar residues. S418 functions as the Nucleophile in the catalytic mechanism. Catalysis depends on D609, which acts as the Charge relay system. D647 contacts Ca(2+). Catalysis depends on H648, which acts as the Charge relay system. Ca(2+) contacts are provided by D650, D655, and D658.

This sequence belongs to the AB hydrolase superfamily. Lipase family.

It localises to the secreted. It catalyses the reaction a triacylglycerol + H2O = a diacylglycerol + a fatty acid + H(+). The polypeptide is Lipase (lip) (Staphylococcus epidermidis (strain ATCC 12228 / FDA PCI 1200)).